The following is a 273-amino-acid chain: NH(3)-dependent NAD(+) synthetase (273 aa).

46–53 (GISGGQDS) provides a ligand contact to ATP. D52 is a Mg(2+) binding site. R139 provides a ligand contact to deamido-NAD(+). T159 serves as a coordination point for ATP. E164 is a binding site for Mg(2+). The deamido-NAD(+) site is built by K172 and D179. 2 residues coordinate ATP: K188 and T210. 259 to 260 (HK) contributes to the deamido-NAD(+) binding site.

It belongs to the NAD synthetase family. As to quaternary structure, homodimer.

It carries out the reaction deamido-NAD(+) + NH4(+) + ATP = AMP + diphosphate + NAD(+) + H(+). The protein operates within cofactor biosynthesis; NAD(+) biosynthesis; NAD(+) from deamido-NAD(+) (ammonia route): step 1/1. Its function is as follows. Catalyzes the ATP-dependent amidation of deamido-NAD to form NAD. Uses ammonia as a nitrogen source. The sequence is that of NH(3)-dependent NAD(+) synthetase from Mycobacteroides abscessus (strain ATCC 19977 / DSM 44196 / CCUG 20993 / CIP 104536 / JCM 13569 / NCTC 13031 / TMC 1543 / L948) (Mycobacterium abscessus).